The primary structure comprises 371 residues: Glutamate 5-kinase (371 aa).

Lysine 12 contacts ATP. The substrate site is built by serine 52, aspartate 136, and asparagine 148. ATP is bound by residues 168 to 169 (SD) and 210 to 216 (TGGMRTK). Residues 275–354 (QGEILVDEGA…EDIAEKFGYS (80 aa)) form the PUA domain.

This sequence belongs to the glutamate 5-kinase family.

It localises to the cytoplasm. It carries out the reaction L-glutamate + ATP = L-glutamyl 5-phosphate + ADP. Its pathway is amino-acid biosynthesis; L-proline biosynthesis; L-glutamate 5-semialdehyde from L-glutamate: step 1/2. Catalyzes the transfer of a phosphate group to glutamate to form L-glutamate 5-phosphate. This is Glutamate 5-kinase from Idiomarina loihiensis (strain ATCC BAA-735 / DSM 15497 / L2-TR).